A 161-amino-acid polypeptide reads, in one-letter code: uncharacterized protein (161 aa).

A helical membrane pass occupies residues 16–36 (KLGLVVAIFFFMMGTTVVVLY).

It localises to the membrane. This is an uncharacterized protein from Encephalitozoon cuniculi (strain GB-M1) (Microsporidian parasite).